The chain runs to 101 residues: Large ribosomal subunit protein bL21 (101 aa).

It belongs to the bacterial ribosomal protein bL21 family. As to quaternary structure, part of the 50S ribosomal subunit. Contacts protein L20.

This protein binds to 23S rRNA in the presence of protein L20. The polypeptide is Large ribosomal subunit protein bL21 (Corynebacterium diphtheriae (strain ATCC 700971 / NCTC 13129 / Biotype gravis)).